Reading from the N-terminus, the 523-residue chain is Transcription factor MYB120 (523 aa).

2 HTH myb-type domains span residues 23 to 75 (GVIL…ANHL) and 76 to 130 (RPNL…KRLL). 2 DNA-binding regions (H-T-H motif) span residues 51–75 (WNAV…ANHL) and 103–126 (WARM…NTRL). Disordered stretches follow at residues 140–254 (DIIP…YPTL), 332–373 (QTAT…SHYT), 396–426 (QIPQ…GAHR), and 444–470 (LASG…NNTN). Residues 147-167 (LHPHPHHQQQQQHNHHHHHHQ) are compositionally biased toward basic residues. The segment covering 175-185 (MYFQPQSSQRN) has biased composition (polar residues). 3 stretches are compositionally biased toward low complexity: residues 202-212 (SSSSFTFHTTT), 223-232 (TPNTPSQLSS), and 341-368 (NPYS…PSFL). Over residues 396–410 (QIPQIDGFNNVNNFT) the composition is skewed to polar residues.

As to expression, expressed in pollen grains and pollen tube. Mostly expressed in mature pollen grains, and, to a lower extent, in inflorescences and siliques.

It is found in the nucleus. Its function is as follows. Transcription activator. Binds to 5'-CAACTGTC-3' and/or 5'-TAACAAA-3' motif in target gene promoter to promote their expression. Together with MYB97 and MYB101, functions as a male factor that controls pollen tube-synergid interaction in fertilization. Required for pollen tube growth arrest and sperm cell release in the female gametophyte, probably via the regulation of pollen tube-specific gene expression. The chain is Transcription factor MYB120 from Arabidopsis thaliana (Mouse-ear cress).